Reading from the N-terminus, the 1150-residue chain is ATP-dependent helicase/deoxyribonuclease subunit B (1150 aa).

8–15 lines the ATP pocket; the sequence is GRAGSGKS. Residues Cys-786, Cys-1106, Cys-1109, and Cys-1115 each contribute to the [4Fe-4S] cluster site.

It belongs to the helicase family. AddB/RexB type 1 subfamily. In terms of assembly, heterodimer of AddA and AddB. Mg(2+) is required as a cofactor. The cofactor is [4Fe-4S] cluster.

In terms of biological role, the heterodimer acts as both an ATP-dependent DNA helicase and an ATP-dependent, dual-direction single-stranded exonuclease. Recognizes the chi site generating a DNA molecule suitable for the initiation of homologous recombination. The AddB subunit has 5' -&gt; 3' nuclease activity but not helicase activity. This chain is ATP-dependent helicase/deoxyribonuclease subunit B, found in Clostridium botulinum (strain Hall / ATCC 3502 / NCTC 13319 / Type A).